Here is a 549-residue protein sequence, read N- to C-terminus: Small ribosomal subunit protein bS1 (549 aa).

6 consecutive S1 motif domains span residues 21 to 87, 105 to 171, 192 to 260, 277 to 347, 364 to 434, and 451 to 512; these read GSIV…LSRE, KATV…VSRR, GSEV…LGLK, NSKL…LGLK, GDKV…LGIK, and GAVV…LSVK.

The protein belongs to the bacterial ribosomal protein bS1 family.

Its function is as follows. Binds mRNA; thus facilitating recognition of the initiation point. It is needed to translate mRNA with a short Shine-Dalgarno (SD) purine-rich sequence. The protein is Small ribosomal subunit protein bS1 (rpsA) of Haemophilus influenzae (strain ATCC 51907 / DSM 11121 / KW20 / Rd).